The following is a 373-amino-acid chain: 3',5'-bisphosphate nucleotidase AHL (373 aa).

The active-site Proton acceptor is D52. Mg(2+) is bound by residues E77, D144, V146, and D147. Residue T149 is the Proton acceptor of the active site. Adenosine 3',5'-bisphosphate is bound by residues T149, S281, K284, K298, and D310. 4 residues coordinate AMP: S281, K284, K298, and D310. Mg(2+) is bound at residue D310.

The protein belongs to the inositol monophosphatase superfamily. Mg(2+) is required as a cofactor. Expressed in roots, leaves, stems, flowers and siliques.

It catalyses the reaction adenosine 3',5'-bisphosphate + H2O = AMP + phosphate. The enzyme catalyses 3'-phosphoadenylyl sulfate + H2O = adenosine 5'-phosphosulfate + phosphate. Its activity is regulated as follows. Inhibited by Li(+) (IC(50)=10 mM), Na(+) (IC(50)=50 mM) and Ca(2+) (IC(50)=0.06 mM). Phosphatase that converts adenosine 3'-phosphate 5'-phosphosulfate (PAPS) to adenosine 5'-phosphosulfate (APS) and 3'-phosphoadenosine 5'-phosphate (3'-PAP) to AMP. May regulate the flux of sulfur in the sulfur-activation pathway by converting PAPS to APS. Prevents both the toxicity of PAP on RNA processing enzymes as well as the product inhibition by PAP of sulfate conjugation. This Arabidopsis thaliana (Mouse-ear cress) protein is 3',5'-bisphosphate nucleotidase AHL.